The following is a 312-amino-acid chain: NAD(P)(+)--arginine ADP-ribosyltransferase 2 (312 aa).

The signal sequence occupies residues 1 to 20 (MELLALRWVLLAGTLLSTSA). The propeptide occupies 21–31 (ASSALQEGDLG). Cystine bridges form between Cys-51–Cys-260 and Cys-159–Cys-208. One can recognise a TR mART core domain in the interval 71–256 (YAYAVGWRKA…IYLRSKGKMS (186 aa)). The NAD(+) site is built by Tyr-108, Arg-164, and Gln-183. Arg-164 is an active-site residue. Ser-186 is an active-site residue. Ser-217 provides a ligand contact to NAD(+). Residue Glu-224 is part of the active site. The propeptide occupies 267 to 312 (GGQWGRGHQEVGLGLSPGLALPVLPCSNCSCWGSGHRAGDPIPAAV).

The protein belongs to the Arg-specific ADP-ribosyltransferase family.

It is found in the secreted. The protein resides in the extracellular space. It carries out the reaction L-arginyl-[protein] + NAD(+) = N(omega)-(ADP-D-ribosyl)-L-arginyl-[protein] + nicotinamide + H(+). This Gallus gallus (Chicken) protein is NAD(P)(+)--arginine ADP-ribosyltransferase 2.